The sequence spans 363 residues: Chorismate synthase (363 aa).

R48 serves as a coordination point for NADP(+). Residues 125–127 (RSS), 238–239 (NA), G278, 293–297 (KPTAS), and R319 each bind FMN.

It belongs to the chorismate synthase family. As to quaternary structure, homotetramer. The cofactor is FMNH2.

The catalysed reaction is 5-O-(1-carboxyvinyl)-3-phosphoshikimate = chorismate + phosphate. It functions in the pathway metabolic intermediate biosynthesis; chorismate biosynthesis; chorismate from D-erythrose 4-phosphate and phosphoenolpyruvate: step 7/7. Catalyzes the anti-1,4-elimination of the C-3 phosphate and the C-6 proR hydrogen from 5-enolpyruvylshikimate-3-phosphate (EPSP) to yield chorismate, which is the branch point compound that serves as the starting substrate for the three terminal pathways of aromatic amino acid biosynthesis. This reaction introduces a second double bond into the aromatic ring system. This is Chorismate synthase from Acinetobacter baylyi (strain ATCC 33305 / BD413 / ADP1).